The chain runs to 930 residues: Protein translocase subunit SecA (930 aa).

Residues Q83, 101–105, and D491 contribute to the ATP site; that span reads GEGKT.

The protein belongs to the SecA family. As to quaternary structure, monomer and homodimer. Part of the essential Sec protein translocation apparatus which comprises SecA, SecYEG and auxiliary proteins SecDF. Other proteins may also be involved.

The protein localises to the cell inner membrane. Its subcellular location is the cellular thylakoid membrane. It is found in the cytoplasm. It catalyses the reaction ATP + H2O + cellular proteinSide 1 = ADP + phosphate + cellular proteinSide 2.. In terms of biological role, part of the Sec protein translocase complex. Interacts with the SecYEG preprotein conducting channel. Has a central role in coupling the hydrolysis of ATP to the transfer of proteins into and across the cell membrane, serving as an ATP-driven molecular motor driving the stepwise translocation of polypeptide chains across the membrane. Functionally, probably participates in protein translocation into and across both the cytoplasmic and thylakoid membranes in cyanobacterial cells. This Nostoc sp. (strain PCC 7120 / SAG 25.82 / UTEX 2576) protein is Protein translocase subunit SecA.